A 279-amino-acid chain; its full sequence is UPF0173 metal-dependent hydrolase MXAN_1394 (279 aa).

This sequence belongs to the UPF0173 family.

This is UPF0173 metal-dependent hydrolase MXAN_1394 from Myxococcus xanthus (strain DK1622).